The sequence spans 278 residues: ATP-dependent dethiobiotin synthetase BioD 1 (278 aa).

51 to 56 (NVGKTI) serves as a coordination point for ATP. Thr55 contributes to the Mg(2+) binding site. Lys76 is an active-site residue. ATP is bound at residue Asp102. The Mg(2+) site is built by Asp102 and Glu163. Residues 223-224 (NR) and 252-254 (PYI) each bind ATP.

It belongs to the dethiobiotin synthetase family. In terms of assembly, homodimer. Requires Mg(2+) as cofactor.

Its subcellular location is the cytoplasm. It catalyses the reaction (7R,8S)-7,8-diammoniononanoate + CO2 + ATP = (4R,5S)-dethiobiotin + ADP + phosphate + 3 H(+). It functions in the pathway cofactor biosynthesis; biotin biosynthesis; biotin from 7,8-diaminononanoate: step 1/2. Functionally, catalyzes a mechanistically unusual reaction, the ATP-dependent insertion of CO2 between the N7 and N8 nitrogen atoms of 7,8-diaminopelargonic acid (DAPA, also called 7,8-diammoniononanoate) to form a ureido ring. This chain is ATP-dependent dethiobiotin synthetase BioD 1, found in Haemophilus ducreyi (strain 35000HP / ATCC 700724).